The chain runs to 128 residues: Ribosome-binding factor A (128 aa).

This sequence belongs to the RbfA family. Monomer. Binds 30S ribosomal subunits, but not 50S ribosomal subunits or 70S ribosomes.

The protein localises to the cytoplasm. One of several proteins that assist in the late maturation steps of the functional core of the 30S ribosomal subunit. Associates with free 30S ribosomal subunits (but not with 30S subunits that are part of 70S ribosomes or polysomes). Required for efficient processing of 16S rRNA. May interact with the 5'-terminal helix region of 16S rRNA. This Rickettsia prowazekii (strain Madrid E) protein is Ribosome-binding factor A.